The sequence spans 313 residues: NF-kappa-B inhibitor delta (313 aa).

ANK repeat units lie at residues 48 to 83 (EGDT…IREH), 84 to 113 (KGKT…EPNA), 117 to 146 (QGRS…QVDL), 152 to 201 (EGLT…NHTS), 206 to 236 (SNKT…DLRT), and 243 to 276 (HGNT…DPTL).

This sequence belongs to the NF-kappa-B inhibitor family. In terms of assembly, interacts with NFKB1, RELA and RELB; in the nucleus.

The protein resides in the nucleus. Functionally, regulates the expression of IL-2, IL-6, and other cytokines through regulation on NF-kappa-B activity. Functions in the regulation of inflammatory responses. Involved in the induction of T helper 17 cells (Th17) differentiation upon recognition of antigen by T cell antigen receptor (TCR). May also regulate TCR-induced negative selection of thymocytes. This is NF-kappa-B inhibitor delta (NFKBID) from Homo sapiens (Human).